Consider the following 513-residue polypeptide: Bifunctional purine biosynthesis protein PurH (513 aa).

Residues 1 to 144 (MKRALVSVSD…KNYRDVTIVV (144 aa)) form the MGS-like domain.

The protein belongs to the PurH family.

The catalysed reaction is (6R)-10-formyltetrahydrofolate + 5-amino-1-(5-phospho-beta-D-ribosyl)imidazole-4-carboxamide = 5-formamido-1-(5-phospho-D-ribosyl)imidazole-4-carboxamide + (6S)-5,6,7,8-tetrahydrofolate. The enzyme catalyses IMP + H2O = 5-formamido-1-(5-phospho-D-ribosyl)imidazole-4-carboxamide. It participates in purine metabolism; IMP biosynthesis via de novo pathway; 5-formamido-1-(5-phospho-D-ribosyl)imidazole-4-carboxamide from 5-amino-1-(5-phospho-D-ribosyl)imidazole-4-carboxamide (10-formyl THF route): step 1/1. It functions in the pathway purine metabolism; IMP biosynthesis via de novo pathway; IMP from 5-formamido-1-(5-phospho-D-ribosyl)imidazole-4-carboxamide: step 1/1. The polypeptide is Bifunctional purine biosynthesis protein PurH (Lactobacillus delbrueckii subsp. bulgaricus (strain ATCC BAA-365 / Lb-18)).